The primary structure comprises 131 residues: Ribosome-binding factor A (131 aa).

It belongs to the RbfA family. As to quaternary structure, monomer. Binds 30S ribosomal subunits, but not 50S ribosomal subunits or 70S ribosomes.

The protein resides in the cytoplasm. In terms of biological role, one of several proteins that assist in the late maturation steps of the functional core of the 30S ribosomal subunit. Associates with free 30S ribosomal subunits (but not with 30S subunits that are part of 70S ribosomes or polysomes). Required for efficient processing of 16S rRNA. May interact with the 5'-terminal helix region of 16S rRNA. The chain is Ribosome-binding factor A from Thermotoga petrophila (strain ATCC BAA-488 / DSM 13995 / JCM 10881 / RKU-1).